Consider the following 212-residue polypeptide: Uridine kinase (212 aa).

Position 13–20 (13–20 (GASASGKS)) interacts with ATP.

It belongs to the uridine kinase family.

The protein localises to the cytoplasm. It carries out the reaction uridine + ATP = UMP + ADP + H(+). The catalysed reaction is cytidine + ATP = CMP + ADP + H(+). It functions in the pathway pyrimidine metabolism; CTP biosynthesis via salvage pathway; CTP from cytidine: step 1/3. It participates in pyrimidine metabolism; UMP biosynthesis via salvage pathway; UMP from uridine: step 1/1. The polypeptide is Uridine kinase (Shewanella denitrificans (strain OS217 / ATCC BAA-1090 / DSM 15013)).